A 983-amino-acid chain; its full sequence is Ephrin type-A receptor 3 (983 aa).

A signal peptide spans 1–19 (MDRRRLPLLLLCAALGSAG). The Extracellular portion of the chain corresponds to 20–540 (RLSARPGNEV…SFSISSENSQ (521 aa)). The Eph LBD domain maps to 28-206 (EVNLLDSKTI…YFKKCPFTVK (179 aa)). Residues N231, N336, N390, N403, and N492 are each glycosylated (N-linked (GlcNAc...) asparagine). 2 consecutive Fibronectin type-III domains span residues 324–434 (PPSA…TNQA) and 435–530 (APSP…TSPD). A helical membrane pass occupies residues 541–564 (VVMIAISAAVAIILLTVVVYVLIG). The Cytoplasmic portion of the chain corresponds to 565-983 (RFCGYKKSKH…THTKNSPVPV (419 aa)). Phosphotyrosine; by autocatalysis occurs at positions 596 and 602. The region spanning 621–882 (ISIDKVVGAG…QIVSILDKLI (262 aa)) is the Protein kinase domain. Residues 628–633 (GAGEFG), K653, and 700–706 (EYMENGS) each bind ATP. Residue Y701 is modified to Phosphotyrosine; by autocatalysis. The active-site Proton acceptor is D746. 750-751 (RN) contributes to the ATP binding site. A Phosphotyrosine; by autocatalysis modification is found at Y779. The SAM domain occupies 911–975 (SAFRTAGDWL…VSSIKTLETH (65 aa)). Residues 981-983 (VPV) carry the PDZ-binding motif.

This sequence belongs to the protein kinase superfamily. Tyr protein kinase family. Ephrin receptor subfamily. As to quaternary structure, heterotetramer upon binding of the ligand. The heterotetramer is composed of an ephrin dimer and a receptor dimer. Oligomerization is probably required to induce biological responses. In terms of processing, autophosphorylates upon activation by EFNA5. As to expression, highly expressed in the developing brain and embryonic tissues. In adult, the greatest levels of expression occur in the brain. It is expressed in a graded manner across the retina with the highest expression at its temporal pole. Detectable in all other adult tissues examined, except the liver.

The protein resides in the cell membrane. It catalyses the reaction L-tyrosyl-[protein] + ATP = O-phospho-L-tyrosyl-[protein] + ADP + H(+). Its function is as follows. Receptor tyrosine kinase which binds promiscuously membrane-bound ephrin family ligands residing on adjacent cells, leading to contact-dependent bidirectional signaling into neighboring cells. The signaling pathway downstream of the receptor is referred to as forward signaling while the signaling pathway downstream of the ephrin ligand is referred to as reverse signaling. Highly promiscuous for ephrin-A ligands it binds preferentially EFNA5. Upon activation by EFNA5 regulates cell-cell adhesion, cytoskeletal organization and cell migration. Plays a role in cardiac cells migration and differentiation probably through activation by EFNA1. Involved in the retinotectal mapping of neurons. May also control the segregation but not the guidance of motor and sensory axons during neuromuscular circuit development. In Gallus gallus (Chicken), this protein is Ephrin type-A receptor 3 (EPHA3).